A 911-amino-acid chain; its full sequence is Zinc finger protein 721 (911 aa).

Residues 69–91 (FQCNARVKVFSKFANSNKDKTRH) form a C2H2-type 1; degenerate zinc finger. The C2H2-type 2 zinc-finger motif lies at 97-119 (FKCNECGKSFQKFSDLTQHKGIH). Residues 125-147 (YTCEERGKDFGWYTDLNQHKKIH) form a C2H2-type 3; degenerate zinc finger. Residues 153–175 (YKCEECGKAFNRSTNLTAHKRIH) form a C2H2-type 4 zinc finger. The C2H2-type 5; degenerate zinc-finger motif lies at 181–203 (YTGEDRDRAFGWSTNLNEYKKIH). 7 C2H2-type zinc fingers span residues 209-231 (YKCK…EKIH), 237-259 (YKCK…KRIH), 265-287 (FKCL…RRIH), 293-315 (YTCE…RRIH), 321-343 (YTCG…RRIH), 349-371 (YKCE…KKIH), and 377-399 (YKCE…KRIH). A C2H2-type 13; degenerate zinc finger spans residues 405–427 (YTCEDRGRAFGLSTNLNEYKKIH). 6 C2H2-type zinc fingers span residues 433–455 (YKCK…EKIH), 461–483 (YKCK…KRIH), 489–511 (FECL…RRIH), 517–539 (YTCE…RRIH), 545–567 (YTCE…RRIH), and 573–595 (YKCE…KKIH). Lysine 478 is covalently cross-linked (Glycyl lysine isopeptide (Lys-Gly) (interchain with G-Cter in SUMO2)). Residues 601-623 (YKCEECGKDFVWYTDLNQQKKIY) form a C2H2-type 20; degenerate zinc finger. The C2H2-type 21; degenerate zinc finger occupies 629-651 (YKCEECGKAFAPSTDLNQHTKIL). Lysine 649 participates in a covalent cross-link: Glycyl lysine isopeptide (Lys-Gly) (interchain with G-Cter in SUMO2). 2 C2H2-type zinc fingers span residues 657–679 (YKCE…KKIH) and 685–707 (YKCE…RRVH). The C2H2-type 24; degenerate zinc-finger motif lies at 713-735 (YKCEDRGRSFGWSTNLNEYKKIH). C2H2-type zinc fingers lie at residues 741-763 (YKCK…EKIH), 769-791 (YKCK…KRIH), 797-819 (FKCL…RRIH), 825-847 (YTCE…RRIH), 853-875 (YTCG…KKIH), and 881-903 (YTCG…KKIH). Lysine 786 participates in a covalent cross-link: Glycyl lysine isopeptide (Lys-Gly) (interchain with G-Cter in SUMO2).

It belongs to the krueppel C2H2-type zinc-finger protein family.

Its subcellular location is the nucleus. In terms of biological role, may be involved in transcriptional regulation. The protein is Zinc finger protein 721 (ZNF721) of Homo sapiens (Human).